The primary structure comprises 629 residues: Hemocyanin C chain (629 aa).

Histidine 175, histidine 179, histidine 206, histidine 326, histidine 330, and histidine 366 together coordinate Cu cation. Asparagine 451 is a glycosylation site (N-linked (GlcNAc...) asparagine). Residues cysteine 537 and cysteine 585 are joined by a disulfide bond. Asparagine 618 is a glycosylation site (N-linked (GlcNAc...) asparagine).

This sequence belongs to the tyrosinase family. Hemocyanin subfamily. In terms of assembly, tarantula hemocyanin is a 24-chain polymer with seven different chains identified. Hemolymph.

The protein resides in the secreted. It localises to the extracellular space. Functionally, hemocyanins are copper-containing oxygen carriers occurring freely dissolved in the hemolymph of many mollusks and arthropods. In Aphonopelma sp. (American tarantula), this protein is Hemocyanin C chain (HCC).